The chain runs to 624 residues: Chaperone protein HtpG (624 aa).

The tract at residues 1–336 (MKGQETRGFQ…SNDLPLNVSR (336 aa)) is a; substrate-binding. Positions 337-552 (EILQDSTVTR…ADEMSTQMAK (216 aa)) are b. A c region spans residues 553-624 (LFAAAGQSVP…IRRMNQLLVS (72 aa)).

The protein belongs to the heat shock protein 90 family. In terms of assembly, homodimer. UMPylated on a histidine residue by YdiU under ATP-limited conditions.

It is found in the cytoplasm. UMPylation of the chaperone by YdiU negatively regulates its activity, facilitating Salmonella survival under ATP-limited conditions. In terms of biological role, molecular chaperone. Has ATPase activity. This chain is Chaperone protein HtpG, found in Salmonella typhimurium (strain LT2 / SGSC1412 / ATCC 700720).